Consider the following 440-residue polypeptide: Xylose isomerase (440 aa).

Residues Asp307 and Asp309 each contribute to the Mg(2+) site.

The protein belongs to the xylose isomerase family. In terms of assembly, homotetramer. Requires Mg(2+) as cofactor.

The protein resides in the cytoplasm. It carries out the reaction alpha-D-xylose = alpha-D-xylulofuranose. The protein is Xylose isomerase of Escherichia coli (strain K12 / MC4100 / BW2952).